The chain runs to 344 residues: tRNA N6-adenosine threonylcarbamoyltransferase (344 aa).

Fe cation-binding residues include H119 and H123. Substrate is bound by residues 141 to 145 (VVSGG), D174, G187, D191, and N280. D310 contacts Fe cation.

Belongs to the KAE1 / TsaD family. Fe(2+) is required as a cofactor.

It localises to the cytoplasm. The catalysed reaction is L-threonylcarbamoyladenylate + adenosine(37) in tRNA = N(6)-L-threonylcarbamoyladenosine(37) in tRNA + AMP + H(+). In terms of biological role, required for the formation of a threonylcarbamoyl group on adenosine at position 37 (t(6)A37) in tRNAs that read codons beginning with adenine. Is involved in the transfer of the threonylcarbamoyl moiety of threonylcarbamoyl-AMP (TC-AMP) to the N6 group of A37, together with TsaE and TsaB. TsaD likely plays a direct catalytic role in this reaction. In Listeria monocytogenes serovar 1/2a (strain ATCC BAA-679 / EGD-e), this protein is tRNA N6-adenosine threonylcarbamoyltransferase.